The following is a 455-amino-acid chain: MPRVPAAHTLVIGLGVSGQAIARHLSRRGEPFMVADTRESPAGLEAFRAAHPGVDVVCGPLEALDMQEAREIVLSPGVDPRTPGLIDYVDHPGSGPEVVGEMALFVRECRSPIAAITGSNAKSTVTTLLGEMARESGWKTAVGGNLGTPALDLLDESPDAELFVLELSSFQLETTPWLGADTAAFLNLSEDHLDRHGDMQGYRAAKQRIFRGARHAVVNAEDPATWPDAPSCAVTRFTTDMPESGEWGIVDHDGERWLAQGRAAIMPVGQVRMPGRHNHANALAALAMGAHLGLSREAMCRVLERFPGLPHRGEFIVEREGVRWINDSKGTNVGATLAAIAGIGSDLEGRLILLAGGDGKGADFSPLAEPLAHHAREAIVFGRDAERLEQALSARLPVTRVADLAAAMQRARTIARAGDTVLLSPACASLDQFPNYMARGEAFRQWLATDGEAAC.

118-124 (GSNAKST) is an ATP binding site.

It belongs to the MurCDEF family.

The protein resides in the cytoplasm. The enzyme catalyses UDP-N-acetyl-alpha-D-muramoyl-L-alanine + D-glutamate + ATP = UDP-N-acetyl-alpha-D-muramoyl-L-alanyl-D-glutamate + ADP + phosphate + H(+). The protein operates within cell wall biogenesis; peptidoglycan biosynthesis. Functionally, cell wall formation. Catalyzes the addition of glutamate to the nucleotide precursor UDP-N-acetylmuramoyl-L-alanine (UMA). The polypeptide is UDP-N-acetylmuramoylalanine--D-glutamate ligase (Chromohalobacter salexigens (strain ATCC BAA-138 / DSM 3043 / CIP 106854 / NCIMB 13768 / 1H11)).